The following is a 407-amino-acid chain: Peptidase T (407 aa).

A Zn(2+)-binding site is contributed by His82. Residue Asp84 is part of the active site. Zn(2+) is bound at residue Asp143. Glu177 functions as the Proton acceptor in the catalytic mechanism. Zn(2+)-binding residues include Glu178, Asp200, and His382.

Belongs to the peptidase M20B family. Requires Zn(2+) as cofactor.

The protein localises to the cytoplasm. It carries out the reaction Release of the N-terminal residue from a tripeptide.. Functionally, cleaves the N-terminal amino acid of tripeptides. The chain is Peptidase T from Streptococcus pyogenes serotype M12 (strain MGAS2096).